Reading from the N-terminus, the 525-residue chain is ATP synthase subunit alpha (525 aa).

171–178 (GDRQTGKS) contacts ATP.

It belongs to the ATPase alpha/beta chains family. In terms of assembly, F-type ATPases have 2 components, CF(1) - the catalytic core - and CF(0) - the membrane proton channel. CF(1) has five subunits: alpha(3), beta(3), gamma(1), delta(1), epsilon(1). CF(0) has three main subunits: a(1), b(2) and c(9-12). The alpha and beta chains form an alternating ring which encloses part of the gamma chain. CF(1) is attached to CF(0) by a central stalk formed by the gamma and epsilon chains, while a peripheral stalk is formed by the delta and b chains.

The protein resides in the cell inner membrane. The catalysed reaction is ATP + H2O + 4 H(+)(in) = ADP + phosphate + 5 H(+)(out). Produces ATP from ADP in the presence of a proton gradient across the membrane. The alpha chain is a regulatory subunit. This chain is ATP synthase subunit alpha, found in Flavobacterium psychrophilum (strain ATCC 49511 / DSM 21280 / CIP 103535 / JIP02/86).